Consider the following 558-residue polypeptide: GPI mannosyltransferase 3 (558 aa).

A run of 4 helical transmembrane segments spans residues 53–73, 81–101, 164–184, and 190–210; these read GLRS…LKLL, VWFA…VSVF, AYCG…LLTL, and VPFL…AVVL. Asn220 carries an N-linked (GlcNAc...) asparagine glycan. Residues 234–254 form a helical membrane-spanning segment; sequence IVLTGLIVLVAVLGGVMVLDY. The N-linked (GlcNAc...) asparagine glycan is linked to Asn275. 4 consecutive transmembrane segments (helical) span residues 292–312, 323–343, 348–368, and 372–392; these read VLVG…LVLW, PVLG…LIDH, FVFV…VRWS, and AVVV…IYLM.

The protein belongs to the glycosyltransferase 22 family. PIGB subfamily.

The protein localises to the endoplasmic reticulum membrane. It participates in glycolipid biosynthesis; glycosylphosphatidylinositol-anchor biosynthesis. Mannosyltransferase involved in glycosylphosphatidylinositol-anchor biosynthesis. Transfers the third alpha-1,2-mannose to Man2-GlcN-acyl-PI during GPI precursor assembly. This Trypanosoma brucei brucei (strain 927/4 GUTat10.1) protein is GPI mannosyltransferase 3 (GPI10).